The chain runs to 1357 residues: DNA-directed RNA polymerase subunit beta (1357 aa).

It belongs to the RNA polymerase beta chain family. The RNAP catalytic core consists of 2 alpha, 1 beta, 1 beta' and 1 omega subunit. When a sigma factor is associated with the core the holoenzyme is formed, which can initiate transcription.

The enzyme catalyses RNA(n) + a ribonucleoside 5'-triphosphate = RNA(n+1) + diphosphate. DNA-dependent RNA polymerase catalyzes the transcription of DNA into RNA using the four ribonucleoside triphosphates as substrates. The polypeptide is DNA-directed RNA polymerase subunit beta (Pseudomonas aeruginosa (strain LESB58)).